Consider the following 368-residue polypeptide: H-2 class I histocompatibility antigen, K-D alpha chain (368 aa).

The first 21 residues, 1–21, serve as a signal peptide directing secretion; it reads MAPCTLLLLLAAALAPTQTRA. The interval 22–111 is alpha-1; the sequence is GPHSLRYFVT…AQRYYNQSKG (90 aa). Residues 22 to 305 are Extracellular-facing; sequence GPHSLRYFVT…KLPPSTVSNT (284 aa). N-linked (GlcNAc...) asparagine glycosylation is present at N107. The interval 112 to 203 is alpha-2; sequence GSHTFQRMFG…ELGNETLLRT (92 aa). A disulfide bond links C122 and C185. 2 N-linked (GlcNAc...) asparagine glycosylation sites follow: N197 and N277. The alpha-3 stretch occupies residues 204–295; that stretch reads DSPKAHVTYH…GLPEPLTLRW (92 aa). Residues 206-294 form the Ig-like C1-type domain; it reads PKAHVTYHPR…KGLPEPLTLR (89 aa). An intrachain disulfide couples C224 to C280. Residues 296-305 form a connecting peptide region; it reads KLPPSTVSNT. The chain crosses the membrane as a helical span at residues 306–328; the sequence is VIIAVLVVLGAAIVTGAVVAFVM. Over 329-368 the chain is Cytoplasmic; it reads KMRRNTGGKGVNYALAPGSQTSDLSLPDGKVMVHDPHSLA. Phosphoserine is present on residues S350 and S353.

This sequence belongs to the MHC class I family. As to quaternary structure, heterodimer of an alpha chain and a beta chain (beta-2-microglobulin).

It is found in the membrane. Its function is as follows. Involved in the presentation of foreign antigens to the immune system. The protein is H-2 class I histocompatibility antigen, K-D alpha chain (H2-K1) of Mus musculus (Mouse).